The chain runs to 436 residues: Glutamate-1-semialdehyde 2,1-aminomutase 2 (436 aa).

Lys271 carries the N6-(pyridoxal phosphate)lysine modification.

Belongs to the class-III pyridoxal-phosphate-dependent aminotransferase family. HemL subfamily. In terms of assembly, homodimer. It depends on pyridoxal 5'-phosphate as a cofactor.

The protein localises to the cytoplasm. It catalyses the reaction (S)-4-amino-5-oxopentanoate = 5-aminolevulinate. It functions in the pathway porphyrin-containing compound metabolism; protoporphyrin-IX biosynthesis; 5-aminolevulinate from L-glutamyl-tRNA(Glu): step 2/2. The polypeptide is Glutamate-1-semialdehyde 2,1-aminomutase 2 (Exiguobacterium sibiricum (strain DSM 17290 / CCUG 55495 / CIP 109462 / JCM 13490 / 255-15)).